A 536-amino-acid polypeptide reads, in one-letter code: 2-isopropylmalate synthase (536 aa).

Residues 8–273 enclose the Pyruvate carboxyltransferase domain; it reads VLIFDTTLRD…FFGRDPESPT (266 aa). Mn(2+) is bound by residues D17, H208, H210, and N244. The tract at residues 408–536 is regulatory domain; sequence QLQLVQVSCG…PQHDLIKANL (129 aa).

It belongs to the alpha-IPM synthase/homocitrate synthase family. LeuA type 1 subfamily. In terms of assembly, homodimer. Mn(2+) is required as a cofactor.

Its subcellular location is the cytoplasm. It catalyses the reaction 3-methyl-2-oxobutanoate + acetyl-CoA + H2O = (2S)-2-isopropylmalate + CoA + H(+). It participates in amino-acid biosynthesis; L-leucine biosynthesis; L-leucine from 3-methyl-2-oxobutanoate: step 1/4. Its function is as follows. Catalyzes the condensation of the acetyl group of acetyl-CoA with 3-methyl-2-oxobutanoate (2-ketoisovalerate) to form 3-carboxy-3-hydroxy-4-methylpentanoate (2-isopropylmalate). The protein is 2-isopropylmalate synthase of Prochlorococcus marinus (strain MIT 9211).